A 75-amino-acid chain; its full sequence is Serine rich endogenous peptide 4 (75 aa).

The first 31 residues, 1 to 31 (MATKTSNLGHLLLSLFILLLFILSQVGVAQA), serve as a signal peptide directing secretion. Residues 51–75 (PPPLRGIVKPPIASFHSASPKDKGP) are disordered. Residues 61 to 75 (PIASFHSASPKDKGP) carry the SCOOP motif motif. A SxS motif essential for MIK2 binding motif is present at residues 67 to 69 (SAS).

The protein belongs to the serine rich endogenous peptide (SCOOP) phytocytokine family. In terms of assembly, interacts with MIK2 (via extracellular leucine-rich repeat domain); this interaction triggers the formation of complex between MIK2 and the BAK1/SERK3 and SERK4 coreceptors, and subsequent BAK1 activation by phosphorylation. In terms of tissue distribution, mostly expressed in leaves and seedlings shoots, and, to a lower extent, in roots, stems, siliques, seeds and flowers.

The protein resides in the cell membrane. It is found in the secreted. Its subcellular location is the extracellular space. It localises to the apoplast. In terms of biological role, brassicaceae-specific phytocytokine (plant endogenous peptide released into the apoplast) perceived by MIK2 in a BAK1/SERK3 and SERK4 coreceptors-dependent manner, that modulates various physiological and antimicrobial processes including growth prevention and reactive oxygen species (ROS) response regulation. Inhibits root growth. Prevents general growth and development. Exhibits antibacterial effects against Pseudomonas syringae pv. tomato DC3000, Ralstonia solanacearum, Bacillus subtilis and Agrobacterium tumefaciens, thus being an antimicrobial peptide (AMP). This is Serine rich endogenous peptide 4 from Arabidopsis thaliana (Mouse-ear cress).